Here is a 618-residue protein sequence, read N- to C-terminus: Probable protein disulfide-isomerase A4 (618 aa).

Residues 1–21 form the signal peptide; that stretch reads MMFDRRFFALVVLLCVSAVRS. Thioredoxin domains lie at 22–139, 138–254, and 480–609; these read TEDA…SRVD, VDPN…DQSK, and SSGK…KHGV. Cystine bridges form between cysteine 65–cysteine 68, cysteine 176–cysteine 179, and cysteine 529–cysteine 532. The Prevents secretion from ER signature appears at 615 to 618; the sequence is KDEL.

It belongs to the protein disulfide isomerase family.

Its subcellular location is the endoplasmic reticulum lumen. The enzyme catalyses Catalyzes the rearrangement of -S-S- bonds in proteins.. The chain is Probable protein disulfide-isomerase A4 from Caenorhabditis elegans.